Consider the following 98-residue polypeptide: Cystatin-B (98 aa).

Met1 carries the N-acetylmethionine modification. The Secondary area of contact signature appears at 46–50 (QVVAG).

Belongs to the cystatin family.

The protein localises to the cytoplasm. Its function is as follows. This is an intracellular thiol proteinase inhibitor. The polypeptide is Cystatin-B (CSTB) (Sus scrofa (Pig)).